A 657-amino-acid chain; its full sequence is Glycogen debranching enzyme (657 aa).

Catalysis depends on aspartate 336, which acts as the Nucleophile. Glutamate 371 acts as the Proton donor in catalysis. Residues 460–481 (ANGEENRDGTNNNYSNNHGKEG) form a disordered region.

Belongs to the glycosyl hydrolase 13 family.

It carries out the reaction Hydrolysis of (1-&gt;6)-alpha-D-glucosidic linkages to branches with degrees of polymerization of three or four glucose residues in limit dextrin.. Its pathway is glycan degradation; glycogen degradation. Functionally, removes maltotriose and maltotetraose chains that are attached by 1,6-alpha-linkage to the limit dextrin main chain, generating a debranched limit dextrin. The protein is Glycogen debranching enzyme of Escherichia coli O157:H7.